Here is a 358-residue protein sequence, read N- to C-terminus: 3-dehydroquinate synthase (358 aa).

Residues 75 to 80 (SGEGSK), 109 to 113 (GVLGD), 133 to 134 (TT), K146, and K155 each bind NAD(+). Positions 188, 245, and 262 each coordinate Zn(2+).

This sequence belongs to the sugar phosphate cyclases superfamily. Dehydroquinate synthase family. It depends on Co(2+) as a cofactor. Requires Zn(2+) as cofactor. NAD(+) is required as a cofactor.

It localises to the cytoplasm. It catalyses the reaction 7-phospho-2-dehydro-3-deoxy-D-arabino-heptonate = 3-dehydroquinate + phosphate. It participates in metabolic intermediate biosynthesis; chorismate biosynthesis; chorismate from D-erythrose 4-phosphate and phosphoenolpyruvate: step 2/7. Catalyzes the conversion of 3-deoxy-D-arabino-heptulosonate 7-phosphate (DAHP) to dehydroquinate (DHQ). This chain is 3-dehydroquinate synthase, found in Methylacidiphilum infernorum (isolate V4) (Methylokorus infernorum (strain V4)).